We begin with the raw amino-acid sequence, 578 residues long: Probable ATP-dependent RNA helicase DDX55 homolog (578 aa).

The Q motif motif lies at 7 to 37; the sequence is PVALKTFREKLGPELLEVFDKSYKSFTDVQV. The region spanning 40 to 218 is the Helicase ATP-binding domain; sequence GTHLLNLSDV…VFGLRNAKQV (179 aa). 53–60 contributes to the ATP binding site; the sequence is SPTGSGKT. Positions 166 to 169 match the DEAD box motif; the sequence is DEAD. The region spanning 231–393 is the Helicase C-terminal domain; it reads TLKNYYVECR…EIKVPTNNSR (163 aa). A disordered region spans residues 507-557; sequence AAKDKKRREKEARKLKKMGGRFRNGGGTGRKAEEKKALKRKAEEEDDAQND. Residues 510 to 526 are compositionally biased toward basic residues; the sequence is DKKRREKEARKLKKMGG. Over residues 536–549 the composition is skewed to basic and acidic residues; the sequence is RKAEEKKALKRKAE.

Belongs to the DEAD box helicase family. DDX55/SPB4 subfamily.

The catalysed reaction is ATP + H2O = ADP + phosphate + H(+). Functionally, probable ATP-binding RNA helicase. In Caenorhabditis elegans, this protein is Probable ATP-dependent RNA helicase DDX55 homolog.